The primary structure comprises 474 residues: Aspartate ammonia-lyase (474 aa).

L-aspartate contacts are provided by T105, S144, T145, N146, and T191. Residues 322-331 (GSSIMPGKVN) are SS loop. Residue S323 is the Proton acceptor of the active site. L-aspartate contacts are provided by S324 and K329.

The protein belongs to the class-II fumarase/aspartase family. Aspartase subfamily. In terms of assembly, homotetramer.

The catalysed reaction is L-aspartate = fumarate + NH4(+). Lyase involved in the degradation of canavanine, the delta-oxa-analog of arginine, allowing growth on canavanine as sole nitrogen and carbon source. Probably catalyzes the conversion of L-aspartate to fumarate and ammonia. The chain is Aspartate ammonia-lyase from Pseudomonas canavaninivorans.